A 128-amino-acid chain; its full sequence is Small ribosomal subunit protein bS6 (128 aa).

The protein belongs to the bacterial ribosomal protein bS6 family.

Functionally, binds together with bS18 to 16S ribosomal RNA. The chain is Small ribosomal subunit protein bS6 from Thermotoga petrophila (strain ATCC BAA-488 / DSM 13995 / JCM 10881 / RKU-1).